Reading from the N-terminus, the 399-residue chain is Methylthioribose kinase (399 aa).

ATP-binding positions include N40, K57, and 111-113; that span reads EDL. D229 serves as a coordination point for substrate. 246-248 is an ATP binding site; sequence DAE. R344 serves as a coordination point for substrate.

Belongs to the methylthioribose kinase family. Homodimer.

It catalyses the reaction 5-(methylsulfanyl)-D-ribose + ATP = 5-(methylsulfanyl)-alpha-D-ribose 1-phosphate + ADP + H(+). It participates in amino-acid biosynthesis; L-methionine biosynthesis via salvage pathway; S-methyl-5-thio-alpha-D-ribose 1-phosphate from S-methyl-5'-thioadenosine (hydrolase route): step 2/2. Catalyzes the phosphorylation of methylthioribose into methylthioribose-1-phosphate. The chain is Methylthioribose kinase from Erwinia tasmaniensis (strain DSM 17950 / CFBP 7177 / CIP 109463 / NCPPB 4357 / Et1/99).